The sequence spans 132 residues: Cliotide T2 (132 aa).

The first 28 residues, 1–28 (MAYVRLTSLAVLFFLAASVMLNVKKTEG), serve as a signal peptide directing secretion. A cross-link (cyclopeptide (Gly-Asn)) is located at residues 29-58 (GEFLKCGESCVQGECYTPGCSCDWPICKKN). Intrachain disulfides connect Cys-34–Cys-48, Cys-38–Cys-50, and Cys-43–Cys-55. Positions 59 to 132 (HIIATNAKTV…NLKMPMTIIN (74 aa)) are cleaved as a propeptide — removed in mature form.

In terms of processing, this is a cyclic peptide. Expressed in flower, stem, shoot and pod but not in root, leaf, seed and nodule (at protein level).

In terms of biological role, probably participates in a plant defense mechanism. Not active against Gram-negative bacteria E.coli ATCC 700926, K.pneumoniae ATTC 13883 and P.aeruginosa ATCC 39018 at concentration up to 100 uM. Has cytotoxic but no hemolytic activity. This Clitoria ternatea (Butterfly pea) protein is Cliotide T2.